The chain runs to 340 residues: MTDTAKYEKSSARCWICYEEYDKKLCSLSNDSWRRPCRCSLIAHESCLISYITRSGSTRCPQCLTAYRIAKPPKEKSWAVNVLGIGHSLEAGLAQVTFGVGSCLGITKFIYSIFKQTGIWICKQVADESSLIEMLKKPVFSSVVLPLLPCMLVRFYEAPPYDIAFSLYTHFSIYSCAEKISNTSLLLCTLPWVRSLYKELMTRIFDGIVIGADGEFEDSETDWFRQFEAQVEHRNQVEDVNEREDTESEFWILLSVAHVFLDAFTTKILRIVRPILLFPLAGKFLGRFIPGNFTKLEKSIIGAFAALVFKDIFVYGFIAWRKRKPWSIRILDNPRRVSDS.

Residues 6–70 (KYEKSSARCW…PQCLTAYRIA (65 aa)) form an RING-CH-type zinc finger. Zn(2+) is bound by residues C14, C17, C37, C39, H44, C47, C60, and C63. 3 helical membrane passes run 249 to 269 (EFWI…TKIL), 274 to 294 (PILL…GNFT), and 300 to 320 (IIGA…FIAW).

The protein localises to the membrane. This is an uncharacterized protein from Schizosaccharomyces pombe (strain 972 / ATCC 24843) (Fission yeast).